An 849-amino-acid chain; its full sequence is A-kinase anchor protein 4 (849 aa).

The propeptide occupies 1 to 188 (MIAYCGTTTM…MAASKNTNNN (188 aa)). 4 positions are modified to phosphoserine: S96, S130, S190, and S204. The span at 183 to 205 (KNTNNNQSPSNPATKSPSNQRSV) shows a compositional bias: polar residues. Positions 183-210 (KNTNNNQSPSNPATKSPSNQRSVATPEG) are disordered. Residue T207 is modified to Phosphothreonine. 3 positions are modified to phosphoserine: S213, S226, and S271. The tract at residues 219–232 (FYVNRLSSLVIQMA) is PKA-RI and PKA-RII subunit binding domain. A Phosphotyrosine modification is found at Y301. Residues S302, S341, S431, S442, S444, S463, S492, S497, and S504 each carry the phosphoserine modification. A PKA-RI-alpha subunit binding domain region spans residues 335-344 (YANQVASDMM). T506 carries the phosphothreonine modification. S538 carries the phosphoserine modification. S583 is modified (phosphoserine; by STK33). Phosphoserine occurs at positions 628, 633, 652, and 702.

Belongs to the AKAP110 family. Interacts with PRKAR1A and PRKAR2A. Interacts with ENO4. Interacts with QRICH2. In terms of processing, phosphorylated by STK33 during sperm flagella assembly. Expressed in the fibrous sheath of spermatozoa (at protein level). Expressed in step 1 to step 6 spermatids, abundance then increases during steps 8 to 12, abundance decreases thereafter.

The protein resides in the cell projection. Its subcellular location is the cilium. It is found in the flagellum. In terms of biological role, major structural component of sperm fibrous sheath. Plays a role in sperm motility. This is A-kinase anchor protein 4 from Mus musculus (Mouse).